The primary structure comprises 327 residues: Cell division protein ZipA (327 aa).

Residues 1–5 (MQDLR) are Periplasmic-facing. Residues 6 to 26 (LILIVVGAIAIIALLLHGLWT) traverse the membrane as a helical segment. The Cytoplasmic segment spans residues 27 to 327 (SRKERSSLFR…REVLDANTIA (301 aa)). Over residues 60–71 (GEVRVRTSHPQE) the composition is skewed to basic and acidic residues. The tract at residues 60–182 (GEVRVRTSHP…EPVAPAPEAK (123 aa)) is disordered. Polar residues-rich tracts occupy residues 94-103 (KSAQVKTASR) and 163-173 (APQQHVESQQE).

The protein belongs to the ZipA family. In terms of assembly, interacts with FtsZ via their C-terminal domains.

It is found in the cell inner membrane. In terms of biological role, essential cell division protein that stabilizes the FtsZ protofilaments by cross-linking them and that serves as a cytoplasmic membrane anchor for the Z ring. Also required for the recruitment to the septal ring of downstream cell division proteins. This is Cell division protein ZipA from Yersinia pseudotuberculosis serotype O:1b (strain IP 31758).